Here is a 349-residue protein sequence, read N- to C-terminus: GDSL esterase/lipase At1g58525 (349 aa).

The signal sequence occupies residues 1–19; sequence MKLQILLLALVLIAVEANA. The N-linked (GlcNAc...) asparagine glycan is linked to N25. The active-site Nucleophile is the S37. An N-linked (GlcNAc...) asparagine glycan is attached at N316. Residues D324 and H327 contribute to the active site.

Belongs to the 'GDSL' lipolytic enzyme family.

The protein resides in the secreted. The polypeptide is GDSL esterase/lipase At1g58525 (Arabidopsis thaliana (Mouse-ear cress)).